The following is a 395-amino-acid chain: MGIKQLFQIIKEEAPDAIKEGEIKNQFGRKVAIDASMSIYSFLIAVRSDGQQLMNDSGETTSHLMGMFYRTLRMVDNGIKPLYVFDGAPPKLKSGELAKRFQRKQEATEGLEEAKETGTAEDIEKFSRRTVRVTREHNAECQRLLKLMGIPYIIAPTEAEAQCAVLAQAGKVYAAASEDMDTLCFNSPILLRHLTFSEQRKEPIQEIHLEKVLEGLGMERKQFVDLCILLGCDYLDPIPKVGPTTALKLIRDHGSLEKIVEAMEKDPKKKYVLPEDWPYKDARDLFFEPDVRKADDPECDVKWEKPDMEGLVQFLVTEKGFSEDRVRSGGARLEKNLKSSQQARLEGFFKPVPKTDAQKAAHKRKLEEKNEEKKKKLKQEKKDKAAAKSKPRGAA.

The tract at residues 1 to 104 is N-domain; it reads MGIKQLFQII…GELAKRFQRK (104 aa). D34 provides a ligand contact to Mg(2+). DNA is bound by residues R47 and R70. Residues D86, E158, E160, D179, and D181 each coordinate Mg(2+). The I-domain stretch occupies residues 122–253; the sequence is DIEKFSRRTV…TTALKLIRDH (132 aa). Residue E158 coordinates DNA. 2 residues coordinate DNA: G231 and D233. D233 is a Mg(2+) binding site. The tract at residues 341 to 349 is interaction with PCNA; the sequence is QQARLEGFF. A disordered region spans residues 344–395; sequence RLEGFFKPVPKTDAQKAAHKRKLEEKNEEKKKKLKQEKKDKAAAKSKPRGAA. Over residues 365 to 386 the composition is skewed to basic and acidic residues; sequence KLEEKNEEKKKKLKQEKKDKAA.

Belongs to the XPG/RAD2 endonuclease family. FEN1 subfamily. Interacts with PCNA. Three molecules of FEN1 bind to one PCNA trimer with each molecule binding to one PCNA monomer. PCNA stimulates the nuclease activity without altering cleavage specificity. Mg(2+) serves as cofactor. Phosphorylated. Phosphorylation upon DNA damage induces relocalization to the nuclear plasma.

The protein localises to the nucleus. Its subcellular location is the nucleolus. It localises to the nucleoplasm. The protein resides in the mitochondrion. Functionally, structure-specific nuclease with 5'-flap endonuclease and 5'-3' exonuclease activities involved in DNA replication and repair. During DNA replication, cleaves the 5'-overhanging flap structure that is generated by displacement synthesis when DNA polymerase encounters the 5'-end of a downstream Okazaki fragment. It enters the flap from the 5'-end and then tracks to cleave the flap base, leaving a nick for ligation. Also involved in the long patch base excision repair (LP-BER) pathway, by cleaving within the apurinic/apyrimidinic (AP) site-terminated flap. Acts as a genome stabilization factor that prevents flaps from equilibrating into structures that lead to duplications and deletions. Also possesses 5'-3' exonuclease activity on nicked or gapped double-stranded DNA, and exhibits RNase H activity. Also involved in replication and repair of rDNA and in repairing mitochondrial DNA. The protein is Flap endonuclease 1 of Fusarium vanettenii (strain ATCC MYA-4622 / CBS 123669 / FGSC 9596 / NRRL 45880 / 77-13-4) (Fusarium solani subsp. pisi).